Here is a 191-residue protein sequence, read N- to C-terminus: A-type ATP synthase subunit E (191 aa).

It belongs to the V-ATPase E subunit family. As to quaternary structure, has multiple subunits with at least A(3), B(3), C, D, E, F, H, I and proteolipid K(x). In terms of processing, the N-terminus is blocked.

The protein resides in the cell membrane. In terms of biological role, component of the A-type ATP synthase that produces ATP from ADP in the presence of a proton gradient across the membrane. The protein is A-type ATP synthase subunit E of Sulfurisphaera tokodaii (strain DSM 16993 / JCM 10545 / NBRC 100140 / 7) (Sulfolobus tokodaii).